Here is a 505-residue protein sequence, read N- to C-terminus: Lysine--tRNA ligase (505 aa).

Residues glutamate 415 and glutamate 422 each coordinate Mg(2+).

It belongs to the class-II aminoacyl-tRNA synthetase family. In terms of assembly, homodimer. Requires Mg(2+) as cofactor.

It localises to the cytoplasm. The enzyme catalyses tRNA(Lys) + L-lysine + ATP = L-lysyl-tRNA(Lys) + AMP + diphosphate. The protein is Lysine--tRNA ligase of Salmonella arizonae (strain ATCC BAA-731 / CDC346-86 / RSK2980).